A 516-amino-acid chain; its full sequence is Adenosine deaminase (516 aa).

The first 20 residues, 1–20 (MFPRLIVWLLAASAVHAVLD), serve as a signal peptide directing secretion.

This sequence belongs to the metallo-dependent hydrolases superfamily. Adenosine and AMP deaminases family. ADGF subfamily. It depends on Zn(2+) as a cofactor. In terms of tissue distribution, salivary gland (at protein level).

The protein resides in the secreted. It carries out the reaction adenosine + H2O + H(+) = inosine + NH4(+). In terms of biological role, catalyzes the deamination of adenosine to inosine. The sequence is that of Adenosine deaminase from Phlebotomus duboscqi (Sandfly).